The following is a 438-amino-acid chain: Serine carboxypeptidase-like 5 (438 aa).

The N-terminal stretch at 1 to 28 (MANYISSVLKSLLLLLHLVFLIQQHVDS) is a signal peptide. Intrachain disulfides connect Cys-87–Cys-328, Cys-251–Cys-263, and Cys-287–Cys-294. Asn-108 is a glycosylation site (N-linked (GlcNAc...) asparagine). Residue Ser-183 is part of the active site. The N-linked (GlcNAc...) asparagine glycan is linked to Asn-347. Residue Asp-363 is part of the active site. Asn-379 carries N-linked (GlcNAc...) asparagine glycosylation. His-416 is an active-site residue.

It belongs to the peptidase S10 family. As to expression, expressed in seedlings, roots, and siliques.

It localises to the secreted. Its function is as follows. Probable carboxypeptidase. This is Serine carboxypeptidase-like 5 (SCPL5) from Arabidopsis thaliana (Mouse-ear cress).